A 429-amino-acid polypeptide reads, in one-letter code: Nicotinate phosphoribosyltransferase (429 aa).

Residues Tyr-15, Phe-177, and Thr-229 each coordinate nicotinate. Position 232 is a phosphohistidine; by autocatalysis (His-232). Arg-294 lines the nicotinate pocket. Thr-355 is a binding site for 5-phospho-alpha-D-ribose 1-diphosphate.

This sequence belongs to the NAPRTase family. Transiently phosphorylated on a His residue during the reaction cycle. Phosphorylation strongly increases the affinity for substrates and increases the rate of nicotinate D-ribonucleotide production. Dephosphorylation regenerates the low-affinity form of the enzyme, leading to product release.

The protein localises to the cytoplasm. It localises to the nucleus. It carries out the reaction nicotinate + 5-phospho-alpha-D-ribose 1-diphosphate + ATP + H2O = nicotinate beta-D-ribonucleotide + ADP + phosphate + diphosphate. It participates in cofactor biosynthesis; NAD(+) biosynthesis; nicotinate D-ribonucleotide from nicotinate: step 1/1. Catalyzes the first step in the biosynthesis of NAD from nicotinic acid, the ATP-dependent synthesis of beta-nicotinate D-ribonucleotide from nicotinate and 5-phospho-D-ribose 1-phosphate. Essential for growth under anaerobic conditions. The sequence is that of Nicotinate phosphoribosyltransferase (NPT1) from Saccharomyces cerevisiae (strain ATCC 204508 / S288c) (Baker's yeast).